A 454-amino-acid chain; its full sequence is VIGIVSLMLQIGNIISIWVSHSIQTGNQHQAEPCIQSIITYENNTWVNQTYVNISNTNFLTEKTVASVTLAGNSSLCPISGWAVYSKDNGIRIGSKGDVFVIREPFISCSHLECRTFFLTQGALLNDKHSNGTVKDRSPHRTLMSCPVGEAPSPYNSRFESVAWSASACHDGTNWLTIGISGPDNGAVAVLKYNGIITDTIKSWRNNILRTQESECACVNGSCFTVMTDGPSNGQASYKIFRIEKGKVVKSVELNAPNYHYEECSCYPDAGEITCVCRDNWHGSNRPWVSFNQNLEYQIGYICSGIFGDNPRPNDGTGSCGPVSSNGAYGIKGFSYKYGNGVWIGRTKSTNSRSGFEMIWDPNGWTGTDSNFSVKQDIVAITDWSGYSGSFVQHPELTGLDCIRPCFWVELIRGRPKESTIWTSGSSISFCGVNSDTVGWSWPDGAELPFTIDK.

Residues 1–13 traverse the membrane as a helical segment; that stretch reads VIGIVSLMLQIGN. Residues 14–454 are Virion surface-facing; that stretch reads IISIWVSHSI…GAELPFTIDK (441 aa). The interval 21 to 75 is hypervariable stalk region; it reads HSIQTGNQHQAEPCIQSIITYENNTWVNQTYVNISNTNFLTEKTVASVTLAGNSS. Residues Asn43, Asn48, Asn53, and Asn73 are each glycosylated (N-linked (GlcNAc...) asparagine; by host). The tract at residues 76-454 is head of neuraminidase; that stretch reads LCPISGWAVY…GAELPFTIDK (379 aa). 8 disulfides stabilise this stretch: Cys77-Cys402, Cys109-Cys114, Cys169-Cys216, Cys218-Cys223, Cys264-Cys277, Cys266-Cys275, Cys303-Cys320, and Cys406-Cys431. Residue Arg103 coordinates substrate. N-linked (GlcNAc...) asparagine; by host glycosylation occurs at Asn131. Residue Asp136 is the Proton donor/acceptor of the active site. Arg137 is a binding site for substrate. The N-linked (GlcNAc...) asparagine; by host glycan is linked to Asn220. 262-263 contributes to the substrate binding site; sequence EE. Position 278 (Arg278) interacts with substrate. Ca(2+)-binding residues include Asp279, Gly283, and Asp309. Arg353 is a substrate binding site. Asn371 carries N-linked (GlcNAc...) asparagine; by host glycosylation. The active-site Nucleophile is Tyr387.

The protein belongs to the glycosyl hydrolase 34 family. As to quaternary structure, homotetramer. It depends on Ca(2+) as a cofactor. In terms of processing, N-glycosylated.

It localises to the virion membrane. Its subcellular location is the host apical cell membrane. It carries out the reaction Hydrolysis of alpha-(2-&gt;3)-, alpha-(2-&gt;6)-, alpha-(2-&gt;8)- glycosidic linkages of terminal sialic acid residues in oligosaccharides, glycoproteins, glycolipids, colominic acid and synthetic substrates.. With respect to regulation, inhibited by the neuraminidase inhibitors zanamivir (Relenza) and oseltamivir (Tamiflu). These drugs interfere with the release of progeny virus from infected cells and are effective against all influenza strains. Resistance to neuraminidase inhibitors is quite rare. In terms of biological role, catalyzes the removal of terminal sialic acid residues from viral and cellular glycoconjugates. Cleaves off the terminal sialic acids on the glycosylated HA during virus budding to facilitate virus release. Additionally helps virus spread through the circulation by further removing sialic acids from the cell surface. These cleavages prevent self-aggregation and ensure the efficient spread of the progeny virus from cell to cell. Otherwise, infection would be limited to one round of replication. Described as a receptor-destroying enzyme because it cleaves a terminal sialic acid from the cellular receptors. May facilitate viral invasion of the upper airways by cleaving the sialic acid moieties on the mucin of the airway epithelial cells. Likely to plays a role in the budding process through its association with lipid rafts during intracellular transport. May additionally display a raft-association independent effect on budding. Plays a role in the determination of host range restriction on replication and virulence. Sialidase activity in late endosome/lysosome traffic seems to enhance virus replication. The sequence is that of Neuraminidase from Influenza A virus (strain A/Teal/China/2978.1/2002 H5N1 genotype W).